Consider the following 529-residue polypeptide: tRNA-2-methylthio-N(6)-dimethylallyladenosine synthase 1 (529 aa).

Residues 1-21 form a disordered region; sequence MTQDHIVTERPPATRNDTAGN. The 117-residue stretch at 25 to 141 folds into the MTTase N-terminal domain; it reads RTYEVRTLGC…LPVLLERSRH (117 aa). Residues Cys34, Cys70, Cys104, Cys178, Cys182, and Cys185 each contribute to the [4Fe-4S] cluster site. Residues 164–407 form the Radical SAM core domain; that stretch reads RDSAYAAWVS…VALQERISLE (244 aa). Positions 410–480 constitute a TRAM domain; sequence RSLVGTRQEL…PHHLIADGPL (71 aa). A disordered region spans residues 481-504; the sequence is LQHRRTPAGDASERGQTPTTRGVG.

Belongs to the methylthiotransferase family. MiaB subfamily. In terms of assembly, monomer. [4Fe-4S] cluster is required as a cofactor.

Its subcellular location is the cytoplasm. It carries out the reaction N(6)-dimethylallyladenosine(37) in tRNA + (sulfur carrier)-SH + AH2 + 2 S-adenosyl-L-methionine = 2-methylsulfanyl-N(6)-dimethylallyladenosine(37) in tRNA + (sulfur carrier)-H + 5'-deoxyadenosine + L-methionine + A + S-adenosyl-L-homocysteine + 2 H(+). Functionally, catalyzes the methylthiolation of N6-(dimethylallyl)adenosine (i(6)A), leading to the formation of 2-methylthio-N6-(dimethylallyl)adenosine (ms(2)i(6)A) at position 37 in tRNAs that read codons beginning with uridine. The protein is tRNA-2-methylthio-N(6)-dimethylallyladenosine synthase 1 of Mycobacterium marinum (strain ATCC BAA-535 / M).